A 137-amino-acid chain; its full sequence is Putative pre-16S rRNA nuclease (137 aa).

It belongs to the YqgF nuclease family.

It is found in the cytoplasm. In terms of biological role, could be a nuclease involved in processing of the 5'-end of pre-16S rRNA. The sequence is that of Putative pre-16S rRNA nuclease from Oceanobacillus iheyensis (strain DSM 14371 / CIP 107618 / JCM 11309 / KCTC 3954 / HTE831).